A 371-amino-acid chain; its full sequence is Beta sliding clamp (371 aa).

Belongs to the beta sliding clamp family. As to quaternary structure, forms a ring-shaped head-to-tail homodimer around DNA which binds and tethers DNA polymerases and other proteins to the DNA. The DNA replisome complex has a single clamp-loading complex (3 tau and 1 each of delta, delta', psi and chi subunits) which binds 3 Pol III cores (1 core on the leading strand and 2 on the lagging strand) each with a beta sliding clamp dimer. Additional proteins in the replisome are other copies of gamma, psi and chi, Ssb, DNA helicase and RNA primase.

Its subcellular location is the cytoplasm. Its function is as follows. Confers DNA tethering and processivity to DNA polymerases and other proteins. Acts as a clamp, forming a ring around DNA (a reaction catalyzed by the clamp-loading complex) which diffuses in an ATP-independent manner freely and bidirectionally along dsDNA. Initially characterized for its ability to contact the catalytic subunit of DNA polymerase III (Pol III), a complex, multichain enzyme responsible for most of the replicative synthesis in bacteria; Pol III exhibits 3'-5' exonuclease proofreading activity. The beta chain is required for initiation of replication as well as for processivity of DNA replication. This is Beta sliding clamp (dnaN) from Treponema pallidum (strain Nichols).